A 353-amino-acid polypeptide reads, in one-letter code: Photosystem II D2 protein (353 aa).

Position 2 is an N-acetylthreonine (threonine 2). Threonine 2 carries the phosphothreonine modification. Residues 41-61 (CAYFAVGGWFTGTTFVTSWYT) traverse the membrane as a helical segment. Histidine 118 is a chlorophyll a binding site. Residues 125 to 141 (GFMLRQFELARSVQLRP) form a helical membrane-spanning segment. Positions 130 and 143 each coordinate pheophytin a. Residues 153-166 (VFVSVFLIYPLGQS) traverse the membrane as a helical segment. Residue histidine 198 coordinates chlorophyll a. A helical membrane pass occupies residues 208-228 (AALLCAIHGATVENTLFEDGD). Histidine 215 and phenylalanine 262 together coordinate a plastoquinone. Residue histidine 215 coordinates Fe cation. Histidine 269 contacts Fe cation. A helical transmembrane segment spans residues 279 to 295 (GLWMSALGVVGLALNLR).

The protein belongs to the reaction center PufL/M/PsbA/D family. In terms of assembly, PSII is composed of 1 copy each of membrane proteins PsbA, PsbB, PsbC, PsbD, PsbE, PsbF, PsbH, PsbI, PsbJ, PsbK, PsbL, PsbM, PsbT, PsbX, PsbY, PsbZ, Psb30/Ycf12, at least 3 peripheral proteins of the oxygen-evolving complex and a large number of cofactors. It forms dimeric complexes. The D1/D2 heterodimer binds P680, chlorophylls that are the primary electron donor of PSII, and subsequent electron acceptors. It shares a non-heme iron and each subunit binds pheophytin, quinone, additional chlorophylls, carotenoids and lipids. There is also a Cl(-1) ion associated with D1 and D2, which is required for oxygen evolution. The PSII complex binds additional chlorophylls, carotenoids and specific lipids. serves as cofactor.

Its subcellular location is the plastid. The protein resides in the chloroplast thylakoid membrane. It carries out the reaction 2 a plastoquinone + 4 hnu + 2 H2O = 2 a plastoquinol + O2. Its function is as follows. Photosystem II (PSII) is a light-driven water:plastoquinone oxidoreductase that uses light energy to abstract electrons from H(2)O, generating O(2) and a proton gradient subsequently used for ATP formation. It consists of a core antenna complex that captures photons, and an electron transfer chain that converts photonic excitation into a charge separation. The D1/D2 (PsbA/PsbD) reaction center heterodimer binds P680, the primary electron donor of PSII as well as several subsequent electron acceptors. D2 is needed for assembly of a stable PSII complex. This chain is Photosystem II D2 protein, found in Cucumis sativus (Cucumber).